Reading from the N-terminus, the 231-residue chain is Cytochrome c oxidase subunit 2 (231 aa).

Over 1-14 (MATPAQLGLQNATS) the chain is Mitochondrial intermembrane. A helical membrane pass occupies residues 15 to 45 (PIMEELIAFHDHALMIIFLISSLVLYIISLM). Residues 46 to 59 (LTTKLTHTSTMNAQ) lie on the Mitochondrial matrix side of the membrane. A helical transmembrane segment spans residues 60-87 (EIEMIWTILPAIILIMIALPSLRILYMT). Over 88–231 (DEFNKPYLTL…WASYLYIVSL (144 aa)) the chain is Mitochondrial intermembrane. Positions 161, 196, 198, 200, 204, and 207 each coordinate Cu cation. Glu-198 lines the Mg(2+) pocket.

It belongs to the cytochrome c oxidase subunit 2 family. Component of the cytochrome c oxidase (complex IV, CIV), a multisubunit enzyme composed of 14 subunits. The complex is composed of a catalytic core of 3 subunits MT-CO1, MT-CO2 and MT-CO3, encoded in the mitochondrial DNA, and 11 supernumerary subunits COX4I, COX5A, COX5B, COX6A, COX6B, COX6C, COX7A, COX7B, COX7C, COX8 and NDUFA4, which are encoded in the nuclear genome. The complex exists as a monomer or a dimer and forms supercomplexes (SCs) in the inner mitochondrial membrane with NADH-ubiquinone oxidoreductase (complex I, CI) and ubiquinol-cytochrome c oxidoreductase (cytochrome b-c1 complex, complex III, CIII), resulting in different assemblies (supercomplex SCI(1)III(2)IV(1) and megacomplex MCI(2)III(2)IV(2)). Found in a complex with TMEM177, COA6, COX18, COX20, SCO1 and SCO2. Interacts with TMEM177 in a COX20-dependent manner. Interacts with COX20. Interacts with COX16. Requires Cu cation as cofactor.

Its subcellular location is the mitochondrion inner membrane. The enzyme catalyses 4 Fe(II)-[cytochrome c] + O2 + 8 H(+)(in) = 4 Fe(III)-[cytochrome c] + 2 H2O + 4 H(+)(out). In terms of biological role, component of the cytochrome c oxidase, the last enzyme in the mitochondrial electron transport chain which drives oxidative phosphorylation. The respiratory chain contains 3 multisubunit complexes succinate dehydrogenase (complex II, CII), ubiquinol-cytochrome c oxidoreductase (cytochrome b-c1 complex, complex III, CIII) and cytochrome c oxidase (complex IV, CIV), that cooperate to transfer electrons derived from NADH and succinate to molecular oxygen, creating an electrochemical gradient over the inner membrane that drives transmembrane transport and the ATP synthase. Cytochrome c oxidase is the component of the respiratory chain that catalyzes the reduction of oxygen to water. Electrons originating from reduced cytochrome c in the intermembrane space (IMS) are transferred via the dinuclear copper A center (CU(A)) of subunit 2 and heme A of subunit 1 to the active site in subunit 1, a binuclear center (BNC) formed by heme A3 and copper B (CU(B)). The BNC reduces molecular oxygen to 2 water molecules using 4 electrons from cytochrome c in the IMS and 4 protons from the mitochondrial matrix. This Aotus nigriceps (Black-headed night monkey) protein is Cytochrome c oxidase subunit 2 (MT-CO2).